Reading from the N-terminus, the 199-residue chain is Superoxide dismutase [Mn/Fe] (199 aa).

Positions 27, 81, 161, and 165 each coordinate Fe(3+). H27, H81, D161, and H165 together coordinate Mn(2+).

It belongs to the iron/manganese superoxide dismutase family. Homodimer. It depends on Mn(2+) as a cofactor. Fe(3+) serves as cofactor.

The catalysed reaction is 2 superoxide + 2 H(+) = H2O2 + O2. In terms of biological role, destroys superoxide anion radicals which are normally produced within the cells and which are toxic to biological systems. Catalyzes the dismutation of superoxide anion radicals into O2 and H2O2 by successive reduction and oxidation of the transition metal ion at the active site. Also contributes to the inhibition of lipid oxidation. Manganese-preferring enzyme, less active with iron than with manganese. The polypeptide is Superoxide dismutase [Mn/Fe] (sodA) (Staphylococcus xylosus).